A 344-amino-acid chain; its full sequence is METPAVSLLVAVYNTETYIRTCLESLRNQTMDNIEIIIVNDGSADASPDIAEEYAKMDNRFKVIHQENQGLGAVRNKGIEAARGEFIAFIDSDDWIEPDYCEQMLRTAGDETDLVICNYAAEFEDTGKTMDSDIAQTYQDQPKEHYIKALFEGKVRGFSWNKLYRRSMIEAHRLSFPLRGELEHVEDQFFSFRAHFFARSVSYVKTPLYHYRIHLSSIVQRYQKKLFESGLALYETNAAFLQENNKLEEYRKELDTFIVLHSSICMLNEWKTSGSRRLFEKLRNVGVICADPVFQESLSKTGTAPFDAKRSCLLLMAKYRMIPFVAMASAVYQRVIEYKMRNRG.

The protein belongs to the glycosyltransferase 2 family.

Functionally, may be involved in the production of the exopolysaccharide (EPS) component of the extracellular matrix during biofilm formation. EPS is responsible for the adhesion of chains of cells into bundles. Required for biofilm maintenance. The chain is Putative glycosyltransferase EpsH (epsH) from Bacillus subtilis (strain 168).